The chain runs to 187 residues: Tetraheme c-type cytochrome CymA (187 aa).

The Cytoplasmic segment spans residues 1 to 12 (MNWRALFKPSAK). Residues 13 to 33 (YSILALLVVGIVIGVVGYFAT) form a helical membrane-spanning segment. At 34 to 187 (QQTLHATSTD…KGVAHPYPKG (154 aa)) the chain is on the periplasmic side. Heme c contacts are provided by C46, C49, H64, C75, C78, H79, D97, C136, C139, H140, C173, C176, H177, and H182.

It belongs to the NapC/NirT/NrfH family. As to quaternary structure, homodimer. The cofactor is heme c.

Its subcellular location is the cell inner membrane. It catalyses the reaction a quinol + 2 Fe(III)-[cytochrome c](out) = a quinone + 2 Fe(II)-[cytochrome c](out) + 2 H(+)(out). Its activity is regulated as follows. Spectroscopic studies suggest that CymA requires a non-heme cofactor for quinol oxidation. Quinol dehydrogenase involved in several anaerobic electron transfer pathways. Acquires electrons from the membrane quinone pool and mediates their transfer to several periplasmic terminal reductases and redox shuttles, including the fumarate reductase FccA, the small tetraheme cytochrome (STC), the c-type cytochrome MtrA, the nitrate reductase NapA (either through NapB or directly), the nitrite reductase NrfA and probably also the DmsE subunit of dimethyl sulfoxide (DMSO) reductase. Required for growth on fumarate and on DMSO, and for the reduction of iron(III), manganese(IV), nitrite and nitrate. Not essential for growth on trimethylamine-N-oxide (TMAO). In Shewanella oneidensis (strain ATCC 700550 / JCM 31522 / CIP 106686 / LMG 19005 / NCIMB 14063 / MR-1), this protein is Tetraheme c-type cytochrome CymA.